Consider the following 359-residue polypeptide: uncharacterized protein (359 aa).

A Protein kinase domain is found at 43–309 (YHLIRKLGSG…VLDFLGDDWG (267 aa)). ATP is bound by residues 49 to 57 (LGSGSYGRV) and K72. D163 functions as the Proton acceptor in the catalytic mechanism. The interval 314–359 (REGPGVLGSAVSYEDREEGGSSLEEWTDEGDDSKSGGRTGTDGGAP) is disordered. Residues 350–359 (GRTGTDGGAP) show a composition bias toward gly residues.

This sequence belongs to the protein kinase superfamily. Ser/Thr protein kinase family. STKL subfamily.

The catalysed reaction is L-seryl-[protein] + ATP = O-phospho-L-seryl-[protein] + ADP + H(+). It catalyses the reaction L-threonyl-[protein] + ATP = O-phospho-L-threonyl-[protein] + ADP + H(+). This is an uncharacterized protein from Homo sapiens (Human).